The primary structure comprises 425 residues: UPF0597 protein VP2173 (425 aa).

The protein belongs to the UPF0597 family.

This chain is UPF0597 protein VP2173, found in Vibrio parahaemolyticus serotype O3:K6 (strain RIMD 2210633).